The chain runs to 744 residues: Probable methylmalonyl-CoA mutase, mitochondrial (744 aa).

Residues 605–737 (QPRIMVAKMG…EKLEANLPEA (133 aa)) form the B12-binding domain. Histidine 618 serves as a coordination point for adenosylcob(III)alamin.

The protein belongs to the methylmalonyl-CoA mutase family. In terms of assembly, homodimer. Requires adenosylcob(III)alamin as cofactor.

It localises to the mitochondrion matrix. It catalyses the reaction (R)-methylmalonyl-CoA = succinyl-CoA. Involved, in man, in the degradation of several amino acids, odd-chain fatty acids and cholesterol via propionyl-CoA to the tricarboxylic acid cycle. MCM has different functions in other species. The sequence is that of Probable methylmalonyl-CoA mutase, mitochondrial (mmcm-1) from Caenorhabditis elegans.